A 392-amino-acid polypeptide reads, in one-letter code: Pannexin-3 (392 aa).

At 1–39 the chain is on the cytoplasmic side; that stretch reads MSLAHTAAEYMLSDALLPDRRGSRLKGLRLELPLDKMVK. The helical transmembrane segment at 40–60 threads the bilayer; that stretch reads FVTVGFPLLLMSLAFAQEFSS. Residues 61–113 lie on the Extracellular side of the membrane; that stretch reads GSPISCFSPSNFSVRQAVFVDSSCWDSLAHYKQDEAGQYTVKSLWPHKALPYS. Asn-71 carries N-linked (GlcNAc...) asparagine glycosylation. A helical membrane pass occupies residues 114-134; sequence LLALAVAMYLPVLLWQYAAVP. Residues 135-215 are Cytoplasmic-facing; that stretch reads ALSSDLLFII…VATYLLRNAL (81 aa). A helical membrane pass occupies residues 216 to 236; the sequence is LLLFTSATYLYLGHFHLDVFF. Topologically, residues 237 to 267 are extracellular; sequence QEEFSCSIKTGLLHEETHVPELITCRLTSLS. The chain crosses the membrane as a helical span at residues 268–288; it reads VFQIVSVSSVAIYTVLVPVII. The Cytoplasmic segment spans residues 289–392; sequence YNLTRLCRWD…LTQHTYDEHP (104 aa).

This sequence belongs to the pannexin family. Homoheptameric. As to expression, skin.

Its subcellular location is the cell membrane. It localises to the cell junction. It is found in the gap junction. The protein localises to the endoplasmic reticulum membrane. The enzyme catalyses Ca(2+)(in) = Ca(2+)(out). It catalyses the reaction ATP(in) = ATP(out). Functionally, regulator of osteoblast differentiation by functionning as a Ca(2+) channel in the endoplasmic reticulum which regulates calmodulin (CaM) pathways. Allows ATP release into the extracellular space and activation or purinergic receptors. The sequence is that of Pannexin-3 (Panx3) from Rattus norvegicus (Rat).